The primary structure comprises 362 residues: Peptide chain release factor 1 (362 aa).

Gln-237 bears the N5-methylglutamine mark. Basic and acidic residues predominate over residues 282-296 (QQEEDKRRAEADSTR). Residues 282 to 304 (QQEEDKRRAEADSTRRSILSTGD) are disordered.

This sequence belongs to the prokaryotic/mitochondrial release factor family. Methylated by PrmC. Methylation increases the termination efficiency of RF1.

Its subcellular location is the cytoplasm. Peptide chain release factor 1 directs the termination of translation in response to the peptide chain termination codons UAG and UAA. The chain is Peptide chain release factor 1 from Tolumonas auensis (strain DSM 9187 / NBRC 110442 / TA 4).